A 353-amino-acid chain; its full sequence is CCN family member 3 (353 aa).

Positions 1–26 (MEPGGGHSLPVLLLLLLLLLLRPSEV) are cleaved as a signal peptide. Residues 29-103 (REAPCPRPCG…GGGTGICMVL (75 aa)) enclose the IGFBP N-terminal domain. 6 disulfides stabilise this stretch: cysteine 33/cysteine 59, cysteine 37/cysteine 61, cysteine 41/cysteine 62, cysteine 48/cysteine 65, cysteine 73/cysteine 87, and cysteine 79/cysteine 100. One can recognise a VWFC domain in the interval 106–172 (DNCVFDGMIY…GECCEKWVCE (67 aa)). The TSP type-1 domain maps to 203 to 248 (NCIEQTTEWSACSRSCGMGFSTRVTNRNQQCEMVKQTRLCMMRPCE). 5 disulfide bridges follow: cysteine 260–cysteine 297, cysteine 277–cysteine 311, cysteine 288–cysteine 327, cysteine 291–cysteine 329, and cysteine 296–cysteine 333. Residues 260-334 (CIRTKKSMKA…NTCVCHGNCP (75 aa)) enclose the CTCK domain. The N-linked (GlcNAc...) asparagine glycan is linked to asparagine 276.

This sequence belongs to the CCN family.

The protein localises to the secreted. The protein resides in the cytoplasm. It localises to the cell junction. Its subcellular location is the gap junction. Immediate-early protein likely to play a role in cell growth regulation. This Coturnix japonica (Japanese quail) protein is CCN family member 3 (CCN3).